A 1835-amino-acid chain; its full sequence is Urea amidolyase (1835 aa).

Residues 122–129 (GAIIVGKT) and Lys-747 each bind ATP. The 444-residue stretch at 632–1075 (LFDTVLIANR…STNILNSYQY (444 aa)) folds into the Biotin carboxylation domain. The region spanning 751–948 (RQIAQKAGVP…LVEWMIRIAA (198 aa)) is the ATP-grasp domain. Ser-803 is modified (phosphoserine). Residues Glu-830 and Asn-865 each coordinate ATP. Positions 1754 to 1832 (DEEEDFPEGA…DSGDIVAVIE (79 aa)) constitute a Biotinyl-binding domain. At Lys-1798 the chain carries N6-biotinyllysine.

As to quaternary structure, monomer. Requires biotin as cofactor.

It carries out the reaction urea + hydrogencarbonate + ATP = urea-1-carboxylate + ADP + phosphate + H(+). The catalysed reaction is urea-1-carboxylate + H2O + 3 H(+) = 2 NH4(+) + 2 CO2. It participates in nitrogen metabolism; urea degradation; CO(2) and NH(3) from urea (allophanate route): step 1/2. It functions in the pathway nitrogen metabolism; urea degradation; CO(2) and NH(3) from urea (allophanate route): step 2/2. Its function is as follows. Hydrolysis of urea to ammonia and CO(2). This is Urea amidolyase (DUR1,2) from Saccharomyces cerevisiae (strain ATCC 204508 / S288c) (Baker's yeast).